The primary structure comprises 443 residues: MESLASLYKNHIATLQERTRDALARFKLDALLIHSGELFNVFLDDHPYPFKVNPQFKAWVPVTQVPNCWLLVDGVNKPKLWFYLPVDYWHNVEPLPNSFWTEDVEVIALPKADGIGSLLPAARGNIGYIGPVPERALQLGIEASNINPKGVIDYLHYYRSFKTEYELACMREAQKMAVNGHRAAEEAFRSGMSEFDINIAYLTATGHRDTDVPYSNIVALNEHAAVLHYTKLDHQAPEEMRSFLLDAGAEYNGYAADLTRTWSAKSDNDYAQLVKDVNDEQLALIATMKAGVSYVDYHIQFHQRIAKLLRKHQIITDMSEEAMVENDLTGPFMPHGIGHPLGLQVHDVAGFMQDDSGTHLAAPAKYPYLRCTRILQPGMVLTIEPGIYFIESLLAPWREGQFSKHFNWQKIEALKPFGGIRIEDNVVIHENSVENMTRDLKLA.

Mn(2+)-binding residues include Asp-246, Asp-257, His-339, Glu-384, and Glu-423.

The protein belongs to the peptidase M24B family. Bacterial-type prolidase subfamily. Mn(2+) serves as cofactor.

The enzyme catalyses Xaa-L-Pro dipeptide + H2O = an L-alpha-amino acid + L-proline. Functionally, splits dipeptides with a prolyl residue in the C-terminal position. This Escherichia coli O7:K1 (strain IAI39 / ExPEC) protein is Xaa-Pro dipeptidase.